Reading from the N-terminus, the 886-residue chain is Valine--tRNA ligase (886 aa).

Residues 53–63 (PNVTGSLHMGH) carry the 'HIGH' region motif. The 'KMSKS' region signature appears at 540–544 (KMSKS). Lysine 543 is an ATP binding site. Positions 820–851 (IDVAAERRRMEKDLAAAQKELASTAAKLANAD) form a coiled coil.

Belongs to the class-I aminoacyl-tRNA synthetase family. ValS type 1 subfamily. Monomer.

The protein localises to the cytoplasm. The catalysed reaction is tRNA(Val) + L-valine + ATP = L-valyl-tRNA(Val) + AMP + diphosphate. Its function is as follows. Catalyzes the attachment of valine to tRNA(Val). As ValRS can inadvertently accommodate and process structurally similar amino acids such as threonine, to avoid such errors, it has a 'posttransfer' editing activity that hydrolyzes mischarged Thr-tRNA(Val) in a tRNA-dependent manner. This is Valine--tRNA ligase from Mycobacterium leprae (strain TN).